Consider the following 198-residue polypeptide: GTP cyclohydrolase-2 (198 aa).

52 to 56 contributes to the GTP binding site; the sequence is RMHSE. Cys57, Cys68, and Cys70 together coordinate Zn(2+). Residues Gln73, 94-96, and Thr116 contribute to the GTP site; that span reads EGR. Asp128 serves as the catalytic Proton acceptor. Catalysis depends on Arg130, which acts as the Nucleophile. Residues Thr151 and Lys156 each coordinate GTP.

This sequence belongs to the GTP cyclohydrolase II family. Requires Zn(2+) as cofactor.

The catalysed reaction is GTP + 4 H2O = 2,5-diamino-6-hydroxy-4-(5-phosphoribosylamino)-pyrimidine + formate + 2 phosphate + 3 H(+). It participates in cofactor biosynthesis; riboflavin biosynthesis; 5-amino-6-(D-ribitylamino)uracil from GTP: step 1/4. Functionally, catalyzes the conversion of GTP to 2,5-diamino-6-ribosylamino-4(3H)-pyrimidinone 5'-phosphate (DARP), formate and pyrophosphate. This Vibrio cholerae serotype O1 (strain ATCC 39315 / El Tor Inaba N16961) protein is GTP cyclohydrolase-2.